We begin with the raw amino-acid sequence, 282 residues long: Succinate dehydrogenase [ubiquinone] iron-sulfur subunit, mitochondrial (282 aa).

Residues 1-26 (MAAVVFSLRRSGPVLRLSGALQVSRG) constitute a mitochondrion transit peptide. The 2Fe-2S ferredoxin-type domain maps to 42–135 (KKFAIYRWDP…VSKIYPLPHM (94 aa)). [2Fe-2S] cluster is bound by residues Cys-95, Cys-100, Cys-103, and Cys-115. One can recognise a 4Fe-4S ferredoxin-type domain in the interval 178 to 208 (DRDKLDGLYECILCACCSTSCPSYWWNADKY). Cys-188, Cys-191, and Cys-194 together coordinate [4Fe-4S] cluster. Residue Cys-198 participates in [3Fe-4S] cluster binding. An a ubiquinone-binding site is contributed by Trp-203. [3Fe-4S] cluster is bound by residues Cys-245 and Cys-251. Position 255 (Cys-255) interacts with [4Fe-4S] cluster.

This sequence belongs to the succinate dehydrogenase/fumarate reductase iron-sulfur protein family. Component of complex II composed of four subunits: the flavoprotein (FP) sdha, iron-sulfur protein (IP) sdhb, and a cytochrome b composed of sdhc and sdhd. [2Fe-2S] cluster is required as a cofactor. It depends on [3Fe-4S] cluster as a cofactor. The cofactor is [4Fe-4S] cluster.

It is found in the mitochondrion inner membrane. The catalysed reaction is a quinone + succinate = fumarate + a quinol. The enzyme catalyses (R)-malate + a quinone = enol-oxaloacetate + a quinol. It carries out the reaction (S)-malate + a quinone = enol-oxaloacetate + a quinol. Its pathway is carbohydrate metabolism; tricarboxylic acid cycle; fumarate from succinate (eukaryal route): step 1/1. With respect to regulation, enol-oxaloacetate inhibits the succinate dehydrogenase activity. Functionally, iron-sulfur protein (IP) subunit of the succinate dehydrogenase complex (mitochondrial respiratory chain complex II), responsible for transferring electrons from succinate to ubiquinone (coenzyme Q). SDH also oxidizes malate to the non-canonical enol form of oxaloacetate, enol-oxaloacetate. Enol-oxaloacetate, which is a potent inhibitor of the succinate dehydrogenase activity, is further isomerized into keto-oxaloacetate. The sequence is that of Succinate dehydrogenase [ubiquinone] iron-sulfur subunit, mitochondrial (sdhb) from Xenopus laevis (African clawed frog).